Here is a 1053-residue protein sequence, read N- to C-terminus: Carbamoyl phosphate synthase large chain (1053 aa).

The tract at residues 1–397 is carboxyphosphate synthetic domain; that stretch reads MPKNTSLKKV…GFKKALRSLD (397 aa). Residues arginine 127, arginine 167, glycine 173, glycine 174, glutamate 206, valine 208, glutamate 213, glycine 239, valine 240, histidine 241, glutamine 282, and glutamate 294 each coordinate ATP. Residues 131 to 323 form the ATP-grasp 1 domain; sequence KKLMLEIGEP…IARVAAKVAI (193 aa). Glutamine 282, glutamate 294, and asparagine 296 together coordinate Mg(2+). The Mn(2+) site is built by glutamine 282, glutamate 294, and asparagine 296. Residues 398 to 530 are oligomerization domain; sequence TDIYRHTDLN…YSTWEQECEL (133 aa). Residues 531–919 form a carbamoyl phosphate synthetic domain region; that stretch reads TQSDRKKILI…YKASQAADNT (389 aa). The ATP-grasp 2 domain maps to 661-852; that stretch reads SVLLDQNNIP…LAKIAAKLML (192 aa). Arginine 697, arginine 736, leucine 738, glutamate 743, glycine 768, valine 769, histidine 770, serine 771, glutamine 811, and glutamate 823 together coordinate ATP. Residues glutamine 811, glutamate 823, and asparagine 825 each contribute to the Mg(2+) site. 3 residues coordinate Mn(2+): glutamine 811, glutamate 823, and asparagine 825. One can recognise an MGS-like domain in the interval 918 to 1053; it reads NTIPLKGNVF…TVEPLSHYHS (136 aa). The tract at residues 920-1053 is allosteric domain; that stretch reads IPLKGNVFIS…TVEPLSHYHS (134 aa).

The protein belongs to the CarB family. Composed of two chains; the small (or glutamine) chain promotes the hydrolysis of glutamine to ammonia, which is used by the large (or ammonia) chain to synthesize carbamoyl phosphate. Tetramer of heterodimers (alpha,beta)4. Mg(2+) serves as cofactor. The cofactor is Mn(2+).

The catalysed reaction is hydrogencarbonate + L-glutamine + 2 ATP + H2O = carbamoyl phosphate + L-glutamate + 2 ADP + phosphate + 2 H(+). It carries out the reaction hydrogencarbonate + NH4(+) + 2 ATP = carbamoyl phosphate + 2 ADP + phosphate + 2 H(+). It functions in the pathway amino-acid biosynthesis; L-arginine biosynthesis; carbamoyl phosphate from bicarbonate: step 1/1. It participates in pyrimidine metabolism; UMP biosynthesis via de novo pathway; (S)-dihydroorotate from bicarbonate: step 1/3. Large subunit of the glutamine-dependent carbamoyl phosphate synthetase (CPSase). CPSase catalyzes the formation of carbamoyl phosphate from the ammonia moiety of glutamine, carbonate, and phosphate donated by ATP, constituting the first step of 2 biosynthetic pathways, one leading to arginine and/or urea and the other to pyrimidine nucleotides. The large subunit (synthetase) binds the substrates ammonia (free or transferred from glutamine from the small subunit), hydrogencarbonate and ATP and carries out an ATP-coupled ligase reaction, activating hydrogencarbonate by forming carboxy phosphate which reacts with ammonia to form carbamoyl phosphate. In Methanocorpusculum labreanum (strain ATCC 43576 / DSM 4855 / Z), this protein is Carbamoyl phosphate synthase large chain.